Consider the following 339-residue polypeptide: Zinc transporter 3 (339 aa).

A signal peptide spans methionine 1 to alanine 25. Topologically, residues alanine 26–lysine 54 are extracellular. A helical transmembrane segment spans residues isoleucine 55–glycine 75. The Cytoplasmic segment spans residues lysine 76 to cysteine 86. Residues phenylalanine 87–valine 107 traverse the membrane as a helical segment. Residues leucine 108–glutamate 123 lie on the Extracellular side of the membrane. Residues alanine 124–valine 144 form a helical membrane-spanning segment. Residues aspartate 145–arginine 184 lie on the Cytoplasmic side of the membrane. Residues valine 185–leucine 205 form a helical membrane-spanning segment. The Extracellular portion of the chain corresponds to glycine 206–alanine 216. A helical transmembrane segment spans residues leucine 217 to alanine 237. The Cytoplasmic segment spans residues glutamine 238 to threonine 247. Residues isoleucine 248–alanine 268 form a helical membrane-spanning segment. Residues asparagine 269 to alanine 278 are Extracellular-facing. The chain crosses the membrane as a helical span at residues leucine 279–valine 299. At aspartate 300 to threonine 315 the chain is on the cytoplasmic side. Residues glycine 316 to alanine 336 traverse the membrane as a helical segment. The Extracellular portion of the chain corresponds to lysine 337–alanine 339.

It belongs to the ZIP transporter (TC 2.A.5) family. In terms of tissue distribution, expressed predominantly in the roots of zinc-deficient plants.

Its subcellular location is the cell membrane. Its function is as follows. Mediates zinc uptake from the rhizosphere. May also transport other divalent cations. This Arabidopsis thaliana (Mouse-ear cress) protein is Zinc transporter 3 (ZIP3).